A 90-amino-acid polypeptide reads, in one-letter code: Progonadoliberin-1 (90 aa).

The signal sequence occupies residues 1–24; sequence MSRHVTVVLLLAIVLLLSSHMIHG. Residue Gln25 is modified to Pyrrolidone carboxylic acid. Gly34 is subject to Glycine amide.

The protein belongs to the GnRH family. Forebrain.

It is found in the secreted. Its function is as follows. Stimulates the secretion of gonadotropins. In Aquarana catesbeiana (American bullfrog), this protein is Progonadoliberin-1 (gnrh1).